A 204-amino-acid polypeptide reads, in one-letter code: ATP phosphoribosyltransferase (204 aa).

Belongs to the ATP phosphoribosyltransferase family. Short subfamily. Heteromultimer composed of HisG and HisZ subunits.

Its subcellular location is the cytoplasm. It carries out the reaction 1-(5-phospho-beta-D-ribosyl)-ATP + diphosphate = 5-phospho-alpha-D-ribose 1-diphosphate + ATP. Its pathway is amino-acid biosynthesis; L-histidine biosynthesis; L-histidine from 5-phospho-alpha-D-ribose 1-diphosphate: step 1/9. In terms of biological role, catalyzes the condensation of ATP and 5-phosphoribose 1-diphosphate to form N'-(5'-phosphoribosyl)-ATP (PR-ATP). Has a crucial role in the pathway because the rate of histidine biosynthesis seems to be controlled primarily by regulation of HisG enzymatic activity. This chain is ATP phosphoribosyltransferase, found in Hydrogenobaculum sp. (strain Y04AAS1).